A 299-amino-acid polypeptide reads, in one-letter code: AUGMIN subunit 1 (299 aa).

An N-acetylserine modification is found at Ser-2. 2 coiled-coil regions span residues 76–96 and 164–184; these read RLKASEYRAQAARIREILESA and RKAIQRLTYLKKILAQLEDDV.

It belongs to the HAUS1 family. In terms of assembly, part of the augmin complex composed of 8 subunits. The complex acts on microtubules and interacts with gamma-tubulin in spindles and the phragmoplast. Interacts with AUG3.

Its subcellular location is the cytoplasm. The protein localises to the cytoskeleton. It is found in the spindle. The protein resides in the phragmoplast. In terms of biological role, involved in microtubules reorganization during spindle and phragmoplast development. The polypeptide is AUGMIN subunit 1 (Arabidopsis thaliana (Mouse-ear cress)).